Consider the following 1222-residue polypeptide: BOS complex subunit NOMO1 (1222 aa).

A signal peptide spans 1–31 (MLVGQGAGPLGPAVVTAAVVLLLSGVGPAHG). Residues 32–1155 (SEDIVVGCGG…NPTRKLPEQD (1124 aa)) lie on the Extracellular side of the membrane. 3 N-linked (GlcNAc...) asparagine glycosylation sites follow: Asn50, Asn218, and Asn618. The chain crosses the membrane as a helical span at residues 1156–1176 (IAQGSYIALPLTLLVLLAGYN). At 1177-1222 (HDKLIPLLLQLTSRLQGVRALGQAASDNSGPEDAKRQAKKQKTRRT) the chain is on the cytoplasmic side. The segment at 1198–1222 (GQAASDNSGPEDAKRQAKKQKTRRT) is disordered. Ser1205 is modified (phosphoserine). Positions 1213–1222 (QAKKQKTRRT) are enriched in basic residues.

As to quaternary structure, component of the back of Sec61 (BOS) complex, composed of NCLN/Nicalin, NOMO (NOMO1, NOMO2 or NOMO3) and TMEM147. The BOS complex is part of the multi-pass translocon (MPT) complex, composed of three subcomplexes, the GEL complex (composed of RAB5IF/OPTI and TMCO1), the BOS complex (composed of NCLN/Nicalin, NOMO and TMEM147) and the PAT complex (composed of WDR83OS/Asterix and CCDC47). The MPT complex associates with the SEC61 complex. Due to the strong similarity between NOMO1, NOMO2 and NOMO3, similar interaction pattern probably occur for the three gene copies. As to expression, expressed in colon tumor tissue and in adjacent normal colonic mucosa.

The protein resides in the endoplasmic reticulum membrane. In terms of biological role, component of the multi-pass translocon (MPT) complex that mediates insertion of multi-pass membrane proteins into the lipid bilayer of membranes. The MPT complex takes over after the SEC61 complex: following membrane insertion of the first few transmembrane segments of proteins by the SEC61 complex, the MPT complex occludes the lateral gate of the SEC61 complex to promote insertion of subsequent transmembrane regions. This chain is BOS complex subunit NOMO1 (NOMO1), found in Homo sapiens (Human).